The primary structure comprises 342 residues: Ferredoxin--NADP reductase (342 aa).

Residues Cys17, Asp36, Gln44, Tyr49, Val89, Phe124, Asp289, and Thr330 each contribute to the FAD site.

It belongs to the ferredoxin--NADP reductase type 2 family. As to quaternary structure, homodimer. It depends on FAD as a cofactor.

The catalysed reaction is 2 reduced [2Fe-2S]-[ferredoxin] + NADP(+) + H(+) = 2 oxidized [2Fe-2S]-[ferredoxin] + NADPH. The polypeptide is Ferredoxin--NADP reductase (Nitrobacter winogradskyi (strain ATCC 25391 / DSM 10237 / CIP 104748 / NCIMB 11846 / Nb-255)).